We begin with the raw amino-acid sequence, 763 residues long: Translation initiation factor IF-2, chloroplastic (763 aa).

3 disordered regions span residues 1–22 (MFLN…NNSS), 52–122 (IDKS…SNSA), and 149–168 (NNKI…DQSI). Residues 13-22 (SSYSTNNNSS) show a composition bias toward low complexity. Residues 73-92 (RIDKKNKNFNKAHDLLDNKK) show a composition bias toward basic and acidic residues. Residues 93–104 (NKNRQRKKIKNK) are compositionally biased toward basic residues. Polar residues predominate over residues 151–168 (KIPQQKKQQVASSIDQSI). A tr-type G domain is found at 261-429 (NRPPVVTILG…ILLLAELENL (169 aa)). GTP is bound by residues 270–277 (GHVDHGKT), 316–320 (DTPGH), and 370–373 (SKID).

It belongs to the TRAFAC class translation factor GTPase superfamily. Classic translation factor GTPase family. IF-2 subfamily.

The protein localises to the plastid. Its subcellular location is the chloroplast. Its function is as follows. One of the essential components for the initiation of protein synthesis. Protects formylmethionyl-tRNA from spontaneous hydrolysis and promotes its binding to the 30S ribosomal subunits. Also involved in the hydrolysis of GTP during the formation of the 70S ribosomal complex. In Porphyra purpurea (Red seaweed), this protein is Translation initiation factor IF-2, chloroplastic (infB).